Consider the following 112-residue polypeptide: UPF0102 protein CHAB381_0216 (112 aa).

Belongs to the UPF0102 family.

This Campylobacter hominis (strain ATCC BAA-381 / DSM 21671 / CCUG 45161 / LMG 19568 / NCTC 13146 / CH001A) protein is UPF0102 protein CHAB381_0216.